Reading from the N-terminus, the 415-residue chain is Glucose-1-phosphate adenylyltransferase (415 aa).

Residues Tyr98, Gly163, 178-179, and Ser189 contribute to the alpha-D-glucose 1-phosphate site; that span reads EK.

The protein belongs to the bacterial/plant glucose-1-phosphate adenylyltransferase family. In terms of assembly, homotetramer.

It carries out the reaction alpha-D-glucose 1-phosphate + ATP + H(+) = ADP-alpha-D-glucose + diphosphate. Its pathway is glycan biosynthesis; glycogen biosynthesis. Involved in the biosynthesis of ADP-glucose, a building block required for the elongation reactions to produce glycogen. Catalyzes the reaction between ATP and alpha-D-glucose 1-phosphate (G1P) to produce pyrophosphate and ADP-Glc. In Fervidobacterium nodosum (strain ATCC 35602 / DSM 5306 / Rt17-B1), this protein is Glucose-1-phosphate adenylyltransferase.